Here is a 372-residue protein sequence, read N- to C-terminus: MAKQYDMVECPFCDEVSKYEKLAKIGQGTFGEVFKAKHRQTGKKVALKKVLMENEKEGFPITALREIKILQLLKHENVVNLIEICRTKASPYNRCKGSIYLVFDFCEHDLAGLLSNTHVKFTLSEIKKVMQMLLNGLYYIHRNKILHRDMKAANVLITRDGVLKLADFGLARAFSLAKNSQPNRYTNRVVTLWYRPPELLLGERDYGPPIDLWGGGCIMAEMWTRSPIMQGNTEQHQLTLISQLCGSITPEVWPNVDKYELYQKLELPKGQKRKVKDRLKAYVKDPYALDLIDKLLVLDPAQRIDSDDALNHDFFWSDPMPSDLKNMLSTHNQSMFEYLAPPRRRGGHMPQQPANQGRNPAATNQTEFDRVF.

The 297-residue stretch at Tyr19–Phe315 folds into the Protein kinase domain. ATP-binding positions include Ile25–Val33 and Lys48. The active-site Proton acceptor is Asp149. The interval Pro341 to Phe372 is disordered. Residues Gln352–Thr366 are compositionally biased toward polar residues.

Belongs to the protein kinase superfamily. CMGC Ser/Thr protein kinase family. CDC2/CDKX subfamily. As to quaternary structure, associates with cyclin-T to form P-TEFb. Also associates with cyclin-K.

The protein localises to the nucleus. The enzyme catalyses L-seryl-[protein] + ATP = O-phospho-L-seryl-[protein] + ADP + H(+). It carries out the reaction L-threonyl-[protein] + ATP = O-phospho-L-threonyl-[protein] + ADP + H(+). It catalyses the reaction [DNA-directed RNA polymerase] + ATP = phospho-[DNA-directed RNA polymerase] + ADP + H(+). Functionally, member of the cyclin-dependent kinase pair (CDK9/cyclin-T) complex, also called positive transcription elongation factor b (P-TEFb), which facilitates the transition from abortive to production elongation by phosphorylating the CTD (C-terminal domain) of the large subunit of RNA polymerase II (RNAP II), SUPT5H and RDBP. The CDK9/cyclin-K complex also has a kinase activity toward CTD of RNAP II and can substitute for P-TEFb in vitro. The protein is Cyclin-dependent kinase 9 (CDK9) of Gallus gallus (Chicken).